A 201-amino-acid chain; its full sequence is Small ribosomal subunit protein uS4c (201 aa).

The tract at residues 15–44 (LGALPGLTNKRPRAGSDLRNQSRSGKKSQY) is disordered. Residues 89–149 (MRLDNILFRL…DEQNSRALIQ (61 aa)) enclose the S4 RNA-binding domain.

The protein belongs to the universal ribosomal protein uS4 family. As to quaternary structure, part of the 30S ribosomal subunit. Contacts protein S5. The interaction surface between S4 and S5 is involved in control of translational fidelity.

It is found in the plastid. It localises to the chloroplast. In terms of biological role, one of the primary rRNA binding proteins, it binds directly to 16S rRNA where it nucleates assembly of the body of the 30S subunit. Functionally, with S5 and S12 plays an important role in translational accuracy. The sequence is that of Small ribosomal subunit protein uS4c (rps4) from Daucus carota (Wild carrot).